The primary structure comprises 230 residues: Large ribosomal subunit protein uL1 (230 aa).

This sequence belongs to the universal ribosomal protein uL1 family. In terms of assembly, part of the 50S ribosomal subunit.

In terms of biological role, binds directly to 23S rRNA. The L1 stalk is quite mobile in the ribosome, and is involved in E site tRNA release. Its function is as follows. Protein L1 is also a translational repressor protein, it controls the translation of the L11 operon by binding to its mRNA. The sequence is that of Large ribosomal subunit protein uL1 from Granulibacter bethesdensis (strain ATCC BAA-1260 / CGDNIH1).